The chain runs to 540 residues: MLO protein homolog 1 (540 aa).

At 1–16 (MAGGRSGSRELPETPT) the chain is on the extracellular side. The helical transmembrane segment at 17–37 (WAVAVVCAVLVLVSVAMEHGL) threads the bilayer. The Cytoplasmic portion of the chain corresponds to 38-60 (HNLSHWFRRRQKKAMGDALDKIK). Residues 61–81 (AELMLLGFISLLLTVAQAPIS) traverse the membrane as a helical segment. The Extracellular segment spans residues 82–142 (KICIPKSAAN…MSAKSMHQLH (61 aa)). The chain crosses the membrane as a helical span at residues 143 to 163 (IFIFVLAVFHVTYCVITMGLG). The Cytoplasmic portion of the chain corresponds to 164-265 (RLKMKKWKKW…IKRSLEDDFK (102 aa)). The helical transmembrane segment at 266 to 286 (VVVGISLPLWFVGILVLFLDI) threads the bilayer. Residue histidine 287 is a topological domain, extracellular. A helical membrane pass occupies residues 288-308 (GLGTLIWISFVPLIIVLLVGT). Residues 309–347 (KLEMVIMQMAQEIQDRATVIQGAPVVEPSNKYFWFNRPD) are Cytoplasmic-facing. A helical transmembrane segment spans residues 348–368 (WVLFFIHLTLFHNAFQMAHFV). Over 369 to 383 (WTMATPGLKKCFHEN) the chain is Extracellular. A helical transmembrane segment spans residues 384 to 404 (IWLSIVEVIVGISLQVLCSYI). Topologically, residues 405-540 (TFPLYALVTQ…DSDFSFSAQR (136 aa)) are cytoplasmic. The tract at residues 426–447 (EQTMKALMNWRKKAMEKKKVRD) is calmodulin-binding. The segment at 468 to 526 (ASPVHLLQDHRARSDDPPSPITVASPPAPEEDIYPVPAAAASRQLLDDPPDRRWMASSS) is disordered. Basic and acidic residues-rich tracts occupy residues 474–483 (LQDHRARSDD) and 512–521 (LLDDPPDRRW).

The protein belongs to the MLO family.

The protein localises to the membrane. May be involved in modulation of pathogen defense and leaf cell death. Activity seems to be regulated by Ca(2+)-dependent calmodulin binding and seems not to require heterotrimeric G proteins. This is MLO protein homolog 1 (MLO1) from Oryza sativa subsp. japonica (Rice).